A 317-amino-acid polypeptide reads, in one-letter code: Phospholipase A1 1 (317 aa).

The first 7 residues, 1–7 (RLIMFVG), serve as a signal peptide directing secretion. Residues 8-17 (DPSSSNELDR) constitute a propeptide that is removed on maturation. Cys21 and Cys104 are disulfide-bonded. Asn25 carries an N-linked (GlcNAc...) asparagine glycan. Ser154 functions as the Nucleophile in the catalytic mechanism. Catalysis depends on Asp182, which acts as the Charge relay system. A disulfide bridge links Cys193 with Cys198. Asn229 carries an N-linked (GlcNAc...) asparagine glycan. Cysteines 236 and 244 form a disulfide. His246 (charge relay system) is an active-site residue. 3 disulfide bridges follow: Cys261–Cys285, Cys262–Cys310, and Cys278–Cys283.

The protein belongs to the AB hydrolase superfamily. Lipase family. Expressed by the venom gland.

It is found in the secreted. The catalysed reaction is a 1,2-diacyl-sn-glycero-3-phosphocholine + H2O = a 2-acyl-sn-glycero-3-phosphocholine + a fatty acid + H(+). Its function is as follows. Catalyzes the hydrolysis of phosphatidylcholine with phospholipase A1 activity. May act as an allergen and induce hemolytic activity. This is Phospholipase A1 1 from Dolichovespula maculata (Bald-faced hornet).